Consider the following 385-residue polypeptide: Exopolygalacturonase rpg15 (385 aa).

The first 26 residues, Met-1–Thr-26, serve as a signal peptide directing secretion. Asn-143, Asn-161, Asn-164, and Asn-180 each carry an N-linked (GlcNAc...) asparagine glycan. 4 PbH1 repeats span residues Ser-165–His-195, Ser-196–Glu-217, Val-219–Gly-241, and Val-249–Thr-270. Asp-210 (proton donor) is an active-site residue. Cysteines 212 and 229 form a disulfide. Asn-226 is a glycosylation site (N-linked (GlcNAc...) asparagine). His-233 is an active-site residue. 3 N-linked (GlcNAc...) asparagine glycosylation sites follow: Asn-256, Asn-319, and Asn-343. Residues Cys-344 and Cys-350 are joined by a disulfide bond. The stretch at Cys-350–Gly-376 is one PbH1 5 repeat. The N-linked (GlcNAc...) asparagine glycan is linked to Asn-365.

Belongs to the glycosyl hydrolase 28 family. N-glycosylated.

The protein localises to the secreted. It catalyses the reaction [(1-&gt;4)-alpha-D-galacturonosyl](n) + H2O = alpha-D-galacturonate + [(1-&gt;4)-alpha-D-galacturonosyl](n-1). Functionally, specific in hydrolyzing the terminal glycosidic bond of polygalacturonic acid and oligogalacturonates. This is Exopolygalacturonase rpg15 from Rhizopus delemar (strain RA 99-880 / ATCC MYA-4621 / FGSC 9543 / NRRL 43880) (Mucormycosis agent).